The sequence spans 141 residues: Nucleoside triphosphatase NudI (141 aa).

Residues methionine 1–leucine 141 form the Nudix hydrolase domain. The Nudix box motif lies at glycine 38–glycine 59.

This sequence belongs to the Nudix hydrolase family. NudI subfamily. As to quaternary structure, monomer. The cofactor is Mg(2+).

It carries out the reaction a ribonucleoside 5'-triphosphate + H2O = a ribonucleoside 5'-phosphate + diphosphate + H(+). It catalyses the reaction a 2'-deoxyribonucleoside 5'-triphosphate + H2O = a 2'-deoxyribonucleoside 5'-phosphate + diphosphate + H(+). The enzyme catalyses dUTP + H2O = dUMP + diphosphate + H(+). The catalysed reaction is dTTP + H2O = dTMP + diphosphate + H(+). It carries out the reaction dCTP + H2O = dCMP + diphosphate + H(+). In terms of biological role, catalyzes the hydrolysis of nucleoside triphosphates, with a preference for pyrimidine deoxynucleoside triphosphates (dUTP, dTTP and dCTP). In Shigella flexneri serotype 5b (strain 8401), this protein is Nucleoside triphosphatase NudI.